The following is a 166-amino-acid chain: Small ribosomal subunit protein uS5 (166 aa).

An S5 DRBM domain is found at 11–74 (LEDRVVSINR…EDAKKNLINV (64 aa)).

It belongs to the universal ribosomal protein uS5 family. Part of the 30S ribosomal subunit. Contacts proteins S4 and S8.

With S4 and S12 plays an important role in translational accuracy. Functionally, located at the back of the 30S subunit body where it stabilizes the conformation of the head with respect to the body. The protein is Small ribosomal subunit protein uS5 of Latilactobacillus sakei subsp. sakei (strain 23K) (Lactobacillus sakei subsp. sakei).